The following is a 150-amino-acid chain: Single-stranded DNA-binding protein 1 (150 aa).

Residues 1 to 104 (MINNVVLVGR…VVADTFQMLE (104 aa)) enclose the SSB domain. Positions 103–120 (LESNKTQGQQTSKPQAQN) are enriched in polar residues. A disordered region spans residues 103–150 (LESNKTQGQQTSKPQAQNKKPQAPDPFKAPAADPFAGGTEISDDDLPF). Residues 121-138 (KKPQAPDPFKAPAADPFA) are compositionally biased toward low complexity. Residues 145–150 (DDDLPF) carry the Important for interaction with partner proteins motif.

Homotetramer.

In terms of biological role, plays an important role in DNA replication, recombination and repair. Binds to ssDNA and to an array of partner proteins to recruit them to their sites of action during DNA metabolism. In Lactococcus lactis subsp. lactis (strain IL1403) (Streptococcus lactis), this protein is Single-stranded DNA-binding protein 1 (ssb1).